The chain runs to 203 residues: Proteasome subunit beta 1 (203 aa).

Residues 1-7 (MAEKLKG) constitute a propeptide, removed in mature form; by autocatalysis. Catalysis depends on threonine 8, which acts as the Nucleophile.

The protein belongs to the peptidase T1B family. The 20S proteasome core is composed of 14 alpha and 14 beta subunits that assemble into four stacked heptameric rings, resulting in a barrel-shaped structure. The two inner rings, each composed of seven catalytic beta subunits, are sandwiched by two outer rings, each composed of seven alpha subunits. The catalytic chamber with the active sites is on the inside of the barrel. Has a gated structure, the ends of the cylinder being occluded by the N-termini of the alpha-subunits. Is capped at one or both ends by the proteasome regulatory ATPase, PAN.

It localises to the cytoplasm. The enzyme catalyses Cleavage of peptide bonds with very broad specificity.. The formation of the proteasomal ATPase PAN-20S proteasome complex, via the docking of the C-termini of PAN into the intersubunit pockets in the alpha-rings, triggers opening of the gate for substrate entry. Interconversion between the open-gate and close-gate conformations leads to a dynamic regulation of the 20S proteasome proteolysis activity. Component of the proteasome core, a large protease complex with broad specificity involved in protein degradation. In Thermococcus onnurineus (strain NA1), this protein is Proteasome subunit beta 1.